The sequence spans 484 residues: Probable autolysin PH (484 aa).

In terms of domain architecture, Peptidase C51 spans 5 to 148 (KNQAEKWFDN…YYDDPMYFIR (144 aa)). One can recognise a MurNAc-LAA domain in the interval 181–363 (IMLVAGHGYN…YSKLIAGAIH (183 aa)). The region spanning 402–472 (KETGYYTVAN…IATGEVDKAG (71 aa)) is the SH3b domain.

It catalyses the reaction Hydrolyzes the link between N-acetylmuramoyl residues and L-amino acid residues in certain cell-wall glycopeptides.. Its function is as follows. Has weak lytic activity toward S.aureus cells. Full-length protein has no activity, but fusion of the Peptidase C51 domain to the lysostaphin SH3 cell wall binding domain yields an active chimeric enzyme, suggesting that PH may be functional. This chain is Probable autolysin PH, found in Staphylococcus aureus (strain NCTC 8325 / PS 47).